The chain runs to 355 residues: Nematocyst expressed protein 3 (355 aa).

Residues 1 to 18 (MKLTYILLIAVVGVAIEA) form the signal peptide. ShKT domains are found at residues 50–89 (CKDV…CKLC), 107–134 (QPQQ…CQLC), and 140–182 (SGPV…CNTY). 6 disulfides stabilise this stretch: cysteine 50–cysteine 89, cysteine 57–cysteine 82, cysteine 71–cysteine 86, cysteine 116–cysteine 131, cysteine 149–cysteine 175, and cysteine 158–cysteine 179. Residues 92–355 (KRSKKQSDYM…KKSKSHKKQH (264 aa)) constitute a propeptide that is removed on maturation. Residues 202–355 (YQPNAMPTPP…KKSKSHKKQH (154 aa)) form a disordered region. Pro residues predominate over residues 207–221 (MPTPPQGVTPAPLPP). 3 stretches are compositionally biased toward low complexity: residues 222–232 (YFQQQGYGYPQ), 240–270 (VQPG…TTTE), and 277–332 (TEAA…AQSD). The segment covering 335 to 355 (NKKKHKKDKAQKKSKSHKKQH) has biased composition (basic residues).

Belongs to the NEP3 family. Nematocytes. In late planulae, transcripts are found throughout the ectoderm in nematocytes, with high concentration of expressing cells in the oral pole. In primary polyps, is expressed in nematocytes in the body wall and physa ectoderm and in the upper and lower pharynx.

It localises to the nematocyst. Its subcellular location is the secreted. Its function is as follows. Neurotoxin. In vivo, induces pronounced contraction and tail twitching on zebrafish larvae, as well as death 5 hours later. This chain is Nematocyst expressed protein 3, found in Nematostella vectensis (Starlet sea anemone).